We begin with the raw amino-acid sequence, 453 residues long: Na(+)/H(+) antiporter NhaA 2 (453 aa).

Helical transmembrane passes span 23–43 (FLHI…AALI), 74–94 (LHFW…GMEI), 111–131 (LPMA…LSFG), 139–159 (GWAV…ALLG), 168–188 (VFLL…IAFF), 191–211 (GGLD…VIGL), 214–234 (IGVG…LGIL), 235–255 (LTGA…PVTA), 316–336 (VAFG…LSGV), 345–365 (WVMI…IVSV), 386–406 (IVLV…IANL), and 419–439 (LGVL…GVWS).

It belongs to the NhaA Na(+)/H(+) (TC 2.A.33) antiporter family.

The protein resides in the cell inner membrane. It carries out the reaction Na(+)(in) + 2 H(+)(out) = Na(+)(out) + 2 H(+)(in). In terms of biological role, na(+)/H(+) antiporter that extrudes sodium in exchange for external protons. The sequence is that of Na(+)/H(+) antiporter NhaA 2 from Pseudomonas putida (strain ATCC 700007 / DSM 6899 / JCM 31910 / BCRC 17059 / LMG 24140 / F1).